The chain runs to 478 residues: MTSWRHDSLGASSSEPLPVVIIGNGPSGICLSYLLSGHIPYVKPGAVHPHPLLQRKLAEAPGVSILDQDLEYLSEGLEGRSQSPVALLFDALLRPDTDFGGSIDSVLSWKRQKDRAVPHLVLGRNLPGGAWHSIEGSMVTLSQGQWMSLPDLQVKDWMRKKCRGLRNSRATAGDIAHYYRDYVIKKGLSHNFVSGAVVTAVEWAKSEHGSPEVQASSPLFQVNGYLTTKDHGHQPFSLRARNVVLATGTFDSPAMLGIPGETLPFVHHDLSALEAALRAGTVNPTSDPVLIVGAGLSAADAVLFARHYNIQVIHAFRRSVHDPGLVFNQLPKMLYPEYHKVQQMMRDQSILSPSPYEGYRSLPEHQPLLFKEDHQAVFQDPQGGQQLFGVSMVLVLIGSHPDLSYLPRAGADLVIDPDQPLSPKRNPIDVDPFTHESTHQEGLYALGPLAGDNFVRFVQGGALAAASSLLKKETRKPP.

Position 12 is a phosphoserine (S12).

It belongs to the OKL38 family. The cofactor is NADPH.

It localises to the midbody. In terms of biological role, monooxygenase catalytic activity. Involved in regulation of cytokinesis; promotes RHOA activity, probably acting locally at the midbody in late cytokinesis. Monooxygenase activity is involved in stabilizing transient structures between daughter cells, termed intercellular bridges, before abscission. Regulates differentiation and proliferation through the regulation of cell death. The polypeptide is Oxidative stress-induced growth inhibitor 1 (Mus musculus (Mouse)).